The sequence spans 734 residues: Homoaconitase, mitochondrial (734 aa).

Residues Met-1–Leu-25 constitute a mitochondrion transit peptide. [4Fe-4S] cluster contacts are provided by Cys-367, Cys-427, and Cys-430.

The protein belongs to the aconitase/IPM isomerase family. [4Fe-4S] cluster serves as cofactor.

It localises to the mitochondrion. It carries out the reaction (2R,3S)-homoisocitrate = cis-homoaconitate + H2O. It participates in amino-acid biosynthesis; L-lysine biosynthesis via AAA pathway; L-alpha-aminoadipate from 2-oxoglutarate: step 3/5. Functionally, catalyzes the reversible hydration of cis-homoaconitate to (2R,3S)-homoisocitrate, a step in the alpha-aminoadipate pathway for lysine biosynthesis. The protein is Homoaconitase, mitochondrial (LYS4) of Mycosarcoma maydis (Corn smut fungus).